We begin with the raw amino-acid sequence, 100 residues long: Putative protein adenylyltransferase MJ0604 (100 aa).

The GSX(10)DXD motif motif lies at 29-43 (GSYARGDYTEESDID). Mg(2+) contacts are provided by Asp-41 and Asp-43.

Belongs to the MntA antitoxin family. The cofactor is Mg(2+).

The catalysed reaction is L-tyrosyl-[protein] + ATP = O-(5'-adenylyl)-L-tyrosyl-[protein] + diphosphate. It catalyses the reaction O-(5'-adenylyl)-L-tyrosyl-[protein] + ATP = O-[5'-(adenylyl-(5'-&gt;3')-adenylyl)]-L-tyrosyl-[protein] + diphosphate. In terms of biological role, putative antitoxin component of a putative type VII toxin-antitoxin (TA) system. Its cognate toxin might be MJ0605, which it might AMPylate. In Methanocaldococcus jannaschii (strain ATCC 43067 / DSM 2661 / JAL-1 / JCM 10045 / NBRC 100440) (Methanococcus jannaschii), this protein is Putative protein adenylyltransferase MJ0604.